Here is a 129-residue protein sequence, read N- to C-terminus: Small ribosomal subunit protein uS11 (129 aa).

It belongs to the universal ribosomal protein uS11 family. In terms of assembly, part of the 30S ribosomal subunit. Interacts with proteins S7 and S18. Binds to IF-3.

In terms of biological role, located on the platform of the 30S subunit, it bridges several disparate RNA helices of the 16S rRNA. Forms part of the Shine-Dalgarno cleft in the 70S ribosome. This Bartonella tribocorum (strain CIP 105476 / IBS 506) protein is Small ribosomal subunit protein uS11.